The following is a 339-amino-acid chain: Adenylosuccinate synthetase (339 aa).

GTP contacts are provided by residues Gly-12–Ser-18 and Gly-42–Ser-44. Residue Asp-13 is the Proton acceptor of the active site. Mg(2+) contacts are provided by Asp-13 and Gly-42. IMP is bound by residues Asp-13 to Lys-16, Asn-40 to His-43, Thr-127, Arg-141, Gln-179, Thr-194, and Arg-256. Catalysis depends on His-43, which acts as the Proton donor. Thr-252–Arg-258 is a binding site for substrate. GTP contacts are provided by residues Arg-258, Met-284–Asp-286, and Lys-324–Gly-326.

This sequence belongs to the adenylosuccinate synthetase family. Homodimer. Mg(2+) is required as a cofactor.

It localises to the cytoplasm. It carries out the reaction IMP + L-aspartate + GTP = N(6)-(1,2-dicarboxyethyl)-AMP + GDP + phosphate + 2 H(+). It functions in the pathway purine metabolism; AMP biosynthesis via de novo pathway; AMP from IMP: step 1/2. Functionally, plays an important role in the de novo pathway of purine nucleotide biosynthesis. Catalyzes the first committed step in the biosynthesis of AMP from IMP. The chain is Adenylosuccinate synthetase from Thermococcus sibiricus (strain DSM 12597 / MM 739).